A 203-amino-acid polypeptide reads, in one-letter code: Glycerol-3-phosphate acyltransferase (203 aa).

A run of 5 helical transmembrane segments spans residues 12-32 (ATLL…GLIL), 66-86 (TLLL…LWGV), 88-108 (AGIA…WLSF), 118-138 (IGVL…IWLA), and 159-179 (IALY…MTVI).

This sequence belongs to the PlsY family. As to quaternary structure, probably interacts with PlsX.

The protein localises to the cell inner membrane. It carries out the reaction an acyl phosphate + sn-glycerol 3-phosphate = a 1-acyl-sn-glycero-3-phosphate + phosphate. It functions in the pathway lipid metabolism; phospholipid metabolism. Catalyzes the transfer of an acyl group from acyl-phosphate (acyl-PO(4)) to glycerol-3-phosphate (G3P) to form lysophosphatidic acid (LPA). This enzyme utilizes acyl-phosphate as fatty acyl donor, but not acyl-CoA or acyl-ACP. The chain is Glycerol-3-phosphate acyltransferase from Sinorhizobium fredii (strain NBRC 101917 / NGR234).